Reading from the N-terminus, the 699-residue chain is Elongation factor G (699 aa).

Positions 8–283 constitute a tr-type G domain; it reads EHIRNIGICA…AVVDFLPSPI (276 aa). GTP is bound by residues 17 to 24, 81 to 85, and 135 to 138; these read AHIDAGKT, DTPGH, and NKMD.

Belongs to the TRAFAC class translation factor GTPase superfamily. Classic translation factor GTPase family. EF-G/EF-2 subfamily.

The protein localises to the cytoplasm. Functionally, catalyzes the GTP-dependent ribosomal translocation step during translation elongation. During this step, the ribosome changes from the pre-translocational (PRE) to the post-translocational (POST) state as the newly formed A-site-bound peptidyl-tRNA and P-site-bound deacylated tRNA move to the P and E sites, respectively. Catalyzes the coordinated movement of the two tRNA molecules, the mRNA and conformational changes in the ribosome. The protein is Elongation factor G of Rickettsia rickettsii (strain Iowa).